A 73-amino-acid polypeptide reads, in one-letter code: MTAITPQEYMASLKEKYNLSATETLFDLPENLQLKFQVEFQKLIHPEQKHFTAVVKSINADGMTIFHRQIVLI.

This is an uncharacterized protein from Enterobacteria phage RB18 (Bacteriophage RB18).